A 370-amino-acid polypeptide reads, in one-letter code: Aminomethyltransferase (370 aa).

It belongs to the GcvT family. The glycine cleavage system is composed of four proteins: P, T, L and H.

The catalysed reaction is N(6)-[(R)-S(8)-aminomethyldihydrolipoyl]-L-lysyl-[protein] + (6S)-5,6,7,8-tetrahydrofolate = N(6)-[(R)-dihydrolipoyl]-L-lysyl-[protein] + (6R)-5,10-methylene-5,6,7,8-tetrahydrofolate + NH4(+). The glycine cleavage system catalyzes the degradation of glycine. In Clostridium botulinum (strain Langeland / NCTC 10281 / Type F), this protein is Aminomethyltransferase.